The primary structure comprises 383 residues: Succinyl-diaminopimelate desuccinylase (383 aa).

A Zn(2+)-binding site is contributed by H73. The active site involves D75. Position 107 (D107) interacts with Zn(2+). E141 acts as the Proton acceptor in catalysis. Zn(2+)-binding residues include E142, E170, and H356.

It belongs to the peptidase M20A family. DapE subfamily. Homodimer. The cofactor is Zn(2+). Co(2+) serves as cofactor.

It carries out the reaction N-succinyl-(2S,6S)-2,6-diaminopimelate + H2O = (2S,6S)-2,6-diaminopimelate + succinate. The protein operates within amino-acid biosynthesis; L-lysine biosynthesis via DAP pathway; LL-2,6-diaminopimelate from (S)-tetrahydrodipicolinate (succinylase route): step 3/3. In terms of biological role, catalyzes the hydrolysis of N-succinyl-L,L-diaminopimelic acid (SDAP), forming succinate and LL-2,6-diaminopimelate (DAP), an intermediate involved in the bacterial biosynthesis of lysine and meso-diaminopimelic acid, an essential component of bacterial cell walls. In Pseudomonas aeruginosa (strain UCBPP-PA14), this protein is Succinyl-diaminopimelate desuccinylase.